Reading from the N-terminus, the 202-residue chain is Large ribosomal subunit protein bL25 (202 aa).

A disordered region spans residues 182-202 (EVEAEETEDDEAASEGEEAAE). Residues 183-202 (VEAEETEDDEAASEGEEAAE) show a composition bias toward acidic residues.

It belongs to the bacterial ribosomal protein bL25 family. CTC subfamily. Part of the 50S ribosomal subunit; part of the 5S rRNA/L5/L18/L25 subcomplex. Contacts the 5S rRNA. Binds to the 5S rRNA independently of L5 and L18.

Functionally, this is one of the proteins that binds to the 5S RNA in the ribosome where it forms part of the central protuberance. The sequence is that of Large ribosomal subunit protein bL25 from Corynebacterium glutamicum (strain R).